The following is a 916-amino-acid chain: Bifunctional aspartokinase/homoserine dehydrogenase 2, chloroplastic (916 aa).

Residues Met-1 to Glu-87 constitute a chloroplast transit peptide. The segment at Met-88–Leu-336 is aspartokinase. Residues Ser-337 to Ile-562 form an interface region. ACT domains lie at Val-412–Asn-487 and Ala-493–Ala-570. Positions Val-563–Ser-916 are homoserine dehydrogenase. NAD(+) is bound at residue Ile-568. NADP(+) is bound by residues Ile-568, Lys-600, Thr-649, and Lys-673. NADPH is bound at residue Ile-568. Thr-649 contributes to the NAD(+) binding site. 2 residues coordinate NADPH: Thr-649 and Lys-673. Positions 700, 703, 705, and 707 each coordinate Na(+). The NADP(+) site is built by Gly-758 and Glu-761. L-homoserine-binding residues include Glu-761 and Asp-772. Lys-776 (proton donor) is an active-site residue. Residue Gly-893 coordinates NAD(+). Residue Gly-893 participates in NADP(+) binding. Gly-893 is a binding site for NADPH.

The protein in the N-terminal section; belongs to the aspartokinase family. In the C-terminal section; belongs to the homoserine dehydrogenase family. As to quaternary structure, homo- or heterodimer. A metal cation is required as a cofactor.

The protein resides in the plastid. It is found in the chloroplast. The catalysed reaction is L-homoserine + NADP(+) = L-aspartate 4-semialdehyde + NADPH + H(+). It catalyses the reaction L-homoserine + NAD(+) = L-aspartate 4-semialdehyde + NADH + H(+). It carries out the reaction L-aspartate + ATP = 4-phospho-L-aspartate + ADP. It functions in the pathway amino-acid biosynthesis; L-lysine biosynthesis via DAP pathway; (S)-tetrahydrodipicolinate from L-aspartate: step 1/4. The protein operates within amino-acid biosynthesis; L-methionine biosynthesis via de novo pathway; L-homoserine from L-aspartate: step 1/3. It participates in amino-acid biosynthesis; L-methionine biosynthesis via de novo pathway; L-homoserine from L-aspartate: step 3/3. Its pathway is amino-acid biosynthesis; L-threonine biosynthesis; L-threonine from L-aspartate: step 1/5. It functions in the pathway amino-acid biosynthesis; L-threonine biosynthesis; L-threonine from L-aspartate: step 3/5. Its activity is regulated as follows. Threonine interaction with Gln-443 leads to inhibition of aspartate kinase activity and facilitates the binding of a second threonine on Gln-524, leading to a partial inhibition of homoserine dehydrogenase activity (25% of activity remaining at saturation with threonine). Homoserine dehydrogenase activity is also partially inhibited by cysteine (15% of activity remaining at saturation with cysteine). No synergy between threonine and cysteine for the inhibition. 13-fold activation of aspartate kinase activity by cysteine, isoleucine, valine, serine and alanine at 2.5 mM and 4-fold activation by leucine at 2.5 mM, but no activation of homoserine dehydrogenase activity. In terms of biological role, bifunctional aspartate kinase and homoserine dehydrogenase that catalyzes the first and the third steps toward the synthesis of lysine, methionine and threonine from aspartate. This chain is Bifunctional aspartokinase/homoserine dehydrogenase 2, chloroplastic (AKHSDH2), found in Arabidopsis thaliana (Mouse-ear cress).